Here is a 203-residue protein sequence, read N- to C-terminus: Ribosome hibernation promotion factor (203 aa).

It belongs to the HPF/YfiA ribosome-associated protein family. Long HPF subfamily. Interacts with 100S ribosomes.

Its subcellular location is the cytoplasm. In terms of biological role, required for dimerization of active 70S ribosomes into 100S ribosomes in stationary phase; 100S ribosomes are translationally inactive and sometimes present during exponential growth. The chain is Ribosome hibernation promotion factor from Bradyrhizobium diazoefficiens (strain JCM 10833 / BCRC 13528 / IAM 13628 / NBRC 14792 / USDA 110).